The sequence spans 457 residues: Acetylcholine receptor subunit alpha (457 aa).

Residues 1–20 (MELSTVLLLLGLCSAGLVLG) form the signal peptide. At 21 to 230 (SEHETRLVAK…ITYHFVMQRL (210 aa)) the chain is on the extracellular side. Disulfide bonds link cysteine 148–cysteine 162 and cysteine 212–cysteine 213. Asparagine 161 carries N-linked (GlcNAc...) asparagine glycosylation. Transmembrane regions (helical) follow at residues 231 to 255 (PLYF…VFYL), 263 to 281 (MTLS…LVIV), and 297 to 316 (YMLF…VIVI). The Cytoplasmic portion of the chain corresponds to 317-428 (NTHHRSPSTH…WKYVAMVMDH (112 aa)). A helical membrane pass occupies residues 429 to 447 (ILLGVFMLVCLIGTLAVFA).

This sequence belongs to the ligand-gated ion channel (TC 1.A.9) family. Acetylcholine receptor (TC 1.A.9.1) subfamily. Alpha-1/CHRNA1 sub-subfamily. As to quaternary structure, one of the alpha chains that assemble within the acetylcholine receptor, a pentamer of two alpha chains, a beta, a delta, and a gamma (in immature muscle) or epsilon (in mature muscle) chains. The muscle heteropentamer composed of alpha-1, beta-1, delta, epsilon subunits interacts with the alpha-conotoxin ImII.

It localises to the postsynaptic cell membrane. The protein localises to the cell membrane. The catalysed reaction is K(+)(in) = K(+)(out). It carries out the reaction Na(+)(in) = Na(+)(out). Its function is as follows. Upon acetylcholine binding, the AChR responds by an extensive change in conformation that affects all subunits and leads to opening of an ion-conducting channel across the plasma membrane. The sequence is that of Acetylcholine receptor subunit alpha (Chrna1) from Mus musculus (Mouse).